The sequence spans 379 residues: Putative FBD-associated F-box protein At5g38570 (379 aa).

Residues 1–47 (MDNINGLPDDLLVKILSFVPTYVAVSTCVLSKRWEFLWMWLPNLEFV) enclose the F-box domain. In terms of domain architecture, FBD spans 295-345 (CWNQPSSVLECLLSSLKILNWSAYFGRPQDRDIAVYILKNACHLKTATFLT).

The chain is Putative FBD-associated F-box protein At5g38570 from Arabidopsis thaliana (Mouse-ear cress).